A 132-amino-acid polypeptide reads, in one-letter code: Glycine cleavage system H protein (132 aa).

The 83-residue stretch at 24-106 (IATIGLSAFA…YGDGWLIKVR (83 aa)) folds into the Lipoyl-binding domain. K65 bears the N6-lipoyllysine mark.

It belongs to the GcvH family. In terms of assembly, the glycine cleavage system is composed of four proteins: P, T, L and H. (R)-lipoate is required as a cofactor.

The glycine cleavage system catalyzes the degradation of glycine. The H protein shuttles the methylamine group of glycine from the P protein to the T protein. The protein is Glycine cleavage system H protein of Rippkaea orientalis (strain PCC 8801 / RF-1) (Cyanothece sp. (strain PCC 8801)).